A 165-amino-acid chain; its full sequence is MSRIALYPGSFDPVTNGHLDVVRHAVELCDRLVVAIGIHPGKKPLFTTEERLVMVRRVFEPVAEAAGCAFDCTTYDNLTVTAAQQVGASLMIRGLRDGTDLDYEMQIAGMNETMAPGVHTVFLPASVGVRPITATLVRQIAAMGGDVSAFVPPDVAASLKSKFAG.

Ser10 provides a ligand contact to substrate. ATP-binding positions include 10–11 and His18; that span reads SF. 3 residues coordinate substrate: Lys42, Thr79, and Arg93. Residues 94–96, Glu104, and 129–135 contribute to the ATP site; these read GLR and VRPITAT.

The protein belongs to the bacterial CoaD family. In terms of assembly, homohexamer. Requires Mg(2+) as cofactor.

It localises to the cytoplasm. It catalyses the reaction (R)-4'-phosphopantetheine + ATP + H(+) = 3'-dephospho-CoA + diphosphate. Its pathway is cofactor biosynthesis; coenzyme A biosynthesis; CoA from (R)-pantothenate: step 4/5. Its function is as follows. Reversibly transfers an adenylyl group from ATP to 4'-phosphopantetheine, yielding dephospho-CoA (dPCoA) and pyrophosphate. This Rhodopseudomonas palustris (strain HaA2) protein is Phosphopantetheine adenylyltransferase.